A 326-amino-acid polypeptide reads, in one-letter code: Putative cell agglutination protein pfl9 (326 aa).

The signal sequence occupies residues 1–21 (MNVVKYIIFSFALAPLLLVNA). N-linked (GlcNAc...) asparagine glycosylation occurs at asparagine 25. A run of 2 repeats spans residues 103–137 (STIT…IPTA) and 138–175 (GTFT…TPSC). The interval 103–175 (STITTTITSG…GEVEVITPSC (73 aa)) is 2 X 36 AA approximate tandem repeats. The DIPSY domain occupies 164-326 (QSGEVEVITP…RANDVTLQLY (163 aa)).

The protein belongs to the mam3/map4 family.

It is found in the cell surface. May be involved in agglutination during conjugation or other aspects of colony formation. Induces flocculation when overexpressed. This chain is Putative cell agglutination protein pfl9, found in Schizosaccharomyces pombe (strain 972 / ATCC 24843) (Fission yeast).